Here is a 3396-residue protein sequence, read N- to C-terminus: Versican core protein (3396 aa).

The N-terminal stretch at 1-20 (MFINIKSILWMCSTLIVTHA) is a signal peptide. The region spanning 21–146 (LHKVKVGKSP…EDTQDTVSLT (126 aa)) is the Ig-like V-type domain. 5 disulfides stabilise this stretch: Cys-44/Cys-130, Cys-172/Cys-243, Cys-196/Cys-217, Cys-270/Cys-345, and Cys-294/Cys-315. Residue Asn-57 is glycosylated (N-linked (GlcNAc...) asparagine). Link domains follow at residues 150-245 (VVFH…YCYV) and 251-347 (DVFH…YCFK). An N-linked (GlcNAc...) asparagine glycan is attached at Asn-330. Residues 348–1335 (PKEATTIDLS…IIEVRENKTG (988 aa)) are GAG-alpha (glucosaminoglycan attachment domain). Residues 420-430 (ATKLPTPTGST) show a composition bias toward polar residues. Disordered stretches follow at residues 420–439 (ATKL…MDDY) and 603–622 (STTV…MDDW). N-linked (GlcNAc...) asparagine glycosylation is present at Asn-615. An O-linked (Xyl...) (chondroitin sulfate) serine glycan is attached at Ser-659. N-linked (GlcNAc...) asparagine glycosylation is found at Asn-782 and Asn-809. Disordered regions lie at residues 807–829 (EDNT…LPPA), 1126–1154 (IGPK…TSSL), and 1277–1316 (REYF…PAST). Positions 811–824 (TSKPLESTEPSASS) are enriched in polar residues. Residues 1143-1154 (EGSSTTGFTSSL) show a composition bias toward low complexity. N-linked (GlcNAc...) asparagine glycans are attached at residues Asn-1332 and Asn-1398. A GAG-beta region spans residues 1336–3089 (RMSDLSVIGH…VEGTAIYLPG (1754 aa)). Disordered stretches follow at residues 1420 to 1497 (VPKD…SGGE) and 1510 to 1539 (FESG…HTEP). The span at 1422–1433 (KDPEAAEARRGQ) shows a compositional bias: basic and acidic residues. N-linked (GlcNAc...) asparagine glycosylation is found at Asn-1442 and Asn-1468. The span at 1469 to 1480 (ESTETTESLEVT) shows a compositional bias: low complexity. The segment covering 1517–1538 (KGAESVTERDTEVGHQAHEHTE) has biased composition (basic and acidic residues). Residues Ser-1548 and Ser-1631 are each glycosylated (O-linked (Xyl...) (chondroitin sulfate) serine). N-linked (GlcNAc...) asparagine glycosylation occurs at Asn-1663. Disordered regions lie at residues 1717-1737 (STTV…TAST) and 1759-1789 (PNVA…MTDS). Residues 1720 to 1729 (VEEKKRKEEE) are compositionally biased toward basic and acidic residues. Over residues 1760 to 1781 (NVATSSDSGTRKSFMSLTTPTQ) the composition is skewed to polar residues. Asn-1898 carries an N-linked (GlcNAc...) asparagine glycan. O-linked (Xyl...) (chondroitin sulfate) serine glycans are attached at residues Ser-1935 and Ser-1959. Disordered stretches follow at residues 1962 to 1994 (AAFR…STMV), 2107 to 2134 (RQEI…NSPA), and 2168 to 2188 (KEMK…PDAN). The segment covering 1969-1978 (TSPSTVPTSV) has biased composition (low complexity). Acidic residues predominate over residues 2111-2120 (ESETTSEEQI). Ser-2116 is subject to Phosphoserine; by FAM20C. Asn-2179 carries an N-linked (GlcNAc...) asparagine glycan. Ser-2247 and Ser-2254 each carry an O-linked (Xyl...) (chondroitin sulfate) serine glycan. Asn-2272, Asn-2280, Asn-2360, Asn-2385, and Asn-2392 each carry an N-linked (GlcNAc...) asparagine glycan. Disordered regions lie at residues 2371–2396 (TSRP…ETTT), 2445–2473 (SATT…EVPS), 2493–2518 (SEQN…STDG), and 2598–2617 (DTEV…DDST). Composition is skewed to polar residues over residues 2445-2461 (SATT…TFVS) and 2496-2513 (NKSS…VSYE). N-linked (GlcNAc...) asparagine glycosylation occurs at Asn-2496. Phosphoserine is present on Ser-2608. At Thr-2617 the chain carries Phosphothreonine. A glycan (N-linked (GlcNAc...) asparagine) is linked at Asn-2628. O-linked (Xyl...) (chondroitin sulfate) serine glycosylation is found at Ser-2722, Ser-2723, and Ser-2767. Disordered stretches follow at residues 2834 to 2856 (GSEA…DVGS) and 2881 to 2905 (EEYL…EDDG). Residues 2896–2905 (TKLEPSEDDG) show a composition bias toward basic and acidic residues. N-linked (GlcNAc...) asparagine glycosylation occurs at Asn-2934. Residue Ser-2941 is glycosylated (O-linked (Xyl...) (chondroitin sulfate) serine). Asn-3067 is a glycosylation site (N-linked (GlcNAc...) asparagine). An EGF-like 1 domain is found at 3089–3125 (GPDRCKMNPCLNGGTCYPTETSYVCTCVPGYSGDQCE). 11 cysteine pairs are disulfide-bonded: Cys-3093-Cys-3104, Cys-3098-Cys-3113, Cys-3115-Cys-3124, Cys-3131-Cys-3142, Cys-3136-Cys-3151, Cys-3153-Cys-3162, Cys-3169-Cys-3180, Cys-3197-Cys-3289, Cys-3265-Cys-3281, Cys-3296-Cys-3339, and Cys-3325-Cys-3352. The 37-residue stretch at 3127-3163 (DFDECHSNPCRNGATCVDGFNTFRCLCLPSYVGALCE) folds into the EGF-like 2; calcium-binding domain. The C-type lectin domain maps to 3176 to 3290 (FQGQCYKYFA…CNYHLTYTCK (115 aa)). Residues 3294 to 3354 (VACGQPPVVE…WAIPKITCMN (61 aa)) form the Sushi domain. Asn-3369 and Asn-3379 each carry an N-linked (GlcNAc...) asparagine glycan. The segment covering 3371-3380 (SSAKDNSINT) has biased composition (polar residues). The segment at 3371–3396 (SSAKDNSINTSKHDHRWSRRWQESRR) is disordered.

The protein belongs to the aggrecan/versican proteoglycan family. In terms of assembly, interacts with FBLN1. Phosphorylated by FAM20C in the extracellular medium. Post-translationally, proteolytically cleaved by ADAMTS5 and ADAMTS15 in the pericellular matrix surrounding myoblasts, facilitating myoblast contact and fusion which is required for skeletal muscle development and regeneration. In terms of tissue distribution, detected in placenta (at protein level). Detected in cerebrospinal fluid, fibroblasts and urine (at protein level). Expressed in the retina (at protein level). Cerebral white matter and plasma. Isoform V0: Expressed in normal brain, gliomas, medulloblastomas, schwannomas, neurofibromas, and meningiomas. Isoform V1: Expressed in normal brain, gliomas, medulloblastomas, schwannomas, neurofibromas, and meningiomas. Isoform V2: Restricted to normal brain and gliomas. Isoform V3: Found in all these tissues except medulloblastomas.

The protein localises to the secreted. The protein resides in the extracellular space. It is found in the extracellular matrix. It localises to the cell projection. Its subcellular location is the cilium. The protein localises to the photoreceptor outer segment. The protein resides in the interphotoreceptor matrix. Functionally, may play a role in intercellular signaling and in connecting cells with the extracellular matrix. May take part in the regulation of cell motility, growth and differentiation. Binds hyaluronic acid. The protein is Versican core protein (VCAN) of Homo sapiens (Human).